A 204-amino-acid polypeptide reads, in one-letter code: Dephospho-CoA kinase (204 aa).

The DPCK domain occupies 13–204; that stretch reads RIGLTGGIAS…LWKNTIKKLV (192 aa). 21-26 is an ATP binding site; sequence ASGKST.

Belongs to the CoaE family.

Its subcellular location is the cytoplasm. It carries out the reaction 3'-dephospho-CoA + ATP = ADP + CoA + H(+). It participates in cofactor biosynthesis; coenzyme A biosynthesis; CoA from (R)-pantothenate: step 5/5. Its function is as follows. Catalyzes the phosphorylation of the 3'-hydroxyl group of dephosphocoenzyme A to form coenzyme A. The sequence is that of Dephospho-CoA kinase from Prochlorococcus marinus subsp. pastoris (strain CCMP1986 / NIES-2087 / MED4).